The following is a 182-amino-acid chain: Trypsin inhibitor 2 (182 aa).

Pyrrolidone carboxylic acid is present on Q1. Disulfide bonds link C40-C84 and C136-C147.

It belongs to the protease inhibitor I3 (leguminous Kunitz-type inhibitor) family.

The sequence is that of Trypsin inhibitor 2 from Psophocarpus tetragonolobus (Winged bean).